Here is an 812-residue protein sequence, read N- to C-terminus: Probable inorganic carbon transporter subunit DabA (812 aa).

Zn(2+)-binding residues include cysteine 337, aspartate 339, histidine 499, and cysteine 514.

This sequence belongs to the inorganic carbon transporter (TC 9.A.2) DabA family. As to quaternary structure, forms a complex with DabB. Zn(2+) is required as a cofactor.

Its subcellular location is the cell inner membrane. Its function is as follows. Part of an energy-coupled inorganic carbon pump. The sequence is that of Probable inorganic carbon transporter subunit DabA from Xanthomonas oryzae pv. oryzae (strain MAFF 311018).